The chain runs to 264 residues: uncharacterized protein (264 aa).

Residues 182-198 (TVTGVSNALGFIIAALL) traverse the membrane as a helical segment.

The protein to E.coli YjiC.

It is found in the membrane. This is an uncharacterized protein from Escherichia coli (strain K12).